The chain runs to 639 residues: 1,4-alpha-glucan branching enzyme GlgB (639 aa).

Catalysis depends on aspartate 313, which acts as the Nucleophile. The active-site Proton donor is glutamate 366.

It belongs to the glycosyl hydrolase 13 family. GlgB subfamily. In terms of assembly, monomer.

The enzyme catalyses Transfers a segment of a (1-&gt;4)-alpha-D-glucan chain to a primary hydroxy group in a similar glucan chain.. It participates in glycan biosynthesis; glycogen biosynthesis. Functionally, catalyzes the formation of the alpha-1,6-glucosidic linkages in glycogen by scission of a 1,4-alpha-linked oligosaccharide from growing alpha-1,4-glucan chains and the subsequent attachment of the oligosaccharide to the alpha-1,6 position. This is 1,4-alpha-glucan branching enzyme GlgB (glgB) from Butyrivibrio fibrisolvens.